A 71-amino-acid chain; its full sequence is Small ribosomal subunit protein bS18 (71 aa).

Belongs to the bacterial ribosomal protein bS18 family. Part of the 30S ribosomal subunit. Forms a tight heterodimer with protein bS6.

In terms of biological role, binds as a heterodimer with protein bS6 to the central domain of the 16S rRNA, where it helps stabilize the platform of the 30S subunit. This Dichelobacter nodosus (strain VCS1703A) protein is Small ribosomal subunit protein bS18.